Reading from the N-terminus, the 315-residue chain is Ribosomal RNA small subunit methyltransferase H (315 aa).

Residues 37 to 39 (GGH), aspartate 57, leucine 91, aspartate 105, and glutamine 112 each bind S-adenosyl-L-methionine.

The protein belongs to the methyltransferase superfamily. RsmH family.

The protein localises to the cytoplasm. The catalysed reaction is cytidine(1402) in 16S rRNA + S-adenosyl-L-methionine = N(4)-methylcytidine(1402) in 16S rRNA + S-adenosyl-L-homocysteine + H(+). Specifically methylates the N4 position of cytidine in position 1402 (C1402) of 16S rRNA. The polypeptide is Ribosomal RNA small subunit methyltransferase H (Syntrophus aciditrophicus (strain SB)).